Here is a 394-residue protein sequence, read N- to C-terminus: Lipid-A-disaccharide synthase (394 aa).

It belongs to the LpxB family.

The enzyme catalyses 2-N,3-O-bis[(3R)-3-hydroxytetradecanoyl]-alpha-D-glucosaminyl 1-phosphate + UDP-2-N,3-O-bis[(3R)-3-hydroxytetradecanoyl]-alpha-D-glucosamine = lipid A disaccharide (E. coli) + UDP + H(+). It carries out the reaction a lipid X + a UDP-2-N,3-O-bis[(3R)-3-hydroxyacyl]-alpha-D-glucosamine = a lipid A disaccharide + UDP + H(+). It participates in glycolipid biosynthesis; lipid IV(A) biosynthesis; lipid IV(A) from (3R)-3-hydroxytetradecanoyl-[acyl-carrier-protein] and UDP-N-acetyl-alpha-D-glucosamine: step 5/6. Its function is as follows. Condensation of UDP-2,3-diacylglucosamine and 2,3-diacylglucosamine-1-phosphate to form lipid A disaccharide, a precursor of lipid A, a phosphorylated glycolipid that anchors the lipopolysaccharide to the outer membrane of the cell. This is Lipid-A-disaccharide synthase from Yersinia pestis.